A 408-amino-acid chain; its full sequence is Histidine--tRNA ligase (408 aa).

This sequence belongs to the class-II aminoacyl-tRNA synthetase family. Homodimer.

It is found in the cytoplasm. It carries out the reaction tRNA(His) + L-histidine + ATP = L-histidyl-tRNA(His) + AMP + diphosphate + H(+). This Campylobacter jejuni subsp. jejuni serotype O:6 (strain 81116 / NCTC 11828) protein is Histidine--tRNA ligase.